We begin with the raw amino-acid sequence, 442 residues long: Ribulose bisphosphate carboxylase/oxygenase activase 1, chloroplastic (442 aa).

Residues 1–58 (MATSVSTIGAVNKTPLSLNNSVAGTSVPSTAFFGKTLKKVYGKGVSSPKVTNKSLRIV) constitute a chloroplast transit peptide. 169-176 (GGKGQGKS) contributes to the ATP binding site.

It belongs to the RuBisCO activase family.

The protein resides in the plastid. The protein localises to the chloroplast stroma. Functionally, activation of RuBisCO (ribulose-1,5-bisphosphate carboxylase/oxygenase; EC 4.1.1.39) involves the ATP-dependent carboxylation of the epsilon-amino group of lysine leading to a carbamate structure. In Nicotiana tabacum (Common tobacco), this protein is Ribulose bisphosphate carboxylase/oxygenase activase 1, chloroplastic.